Here is a 1165-residue protein sequence, read N- to C-terminus: Serine/threonine-protein kinase/endoribonuclease ireA (1165 aa).

Residues 1 to 27 form the signal peptide; sequence MRWRLPGARTTLPASVALLLLPILVAP. Residues 28 to 504 are Lumenal-facing; that stretch reads QQLQEHDDLP…STIIRKGWDN (477 aa). N152 carries N-linked (GlcNAc...) asparagine glycosylation. Residues 505–525 traverse the membrane as a helical segment; it reads AVDIFVTILLLFFGAFIYFNS. Residues 526-1165 lie on the Cytoplasmic side of the membrane; it reads HNIQELAKQK…RFKRYFTPVE (640 aa). The segment at 547-668 is disordered; that stretch reads QPPLSTPSTP…SEGESKDQAD (122 aa). Basic and acidic residues-rich tracts occupy residues 591-600 and 611-620; these read ATPKPKRDRS and KIREPSRGPD. Over residues 637–655 the composition is skewed to basic residues; the sequence is PKKKARRGRRGGKNHRRGK. Residues 656 to 668 show a composition bias toward basic and acidic residues; sequence KPDSEGESKDQAD. The Protein kinase domain occupies 711-1026; the sequence is VFSDVVLGHG…ASAVLMHPFF (316 aa). ATP contacts are provided by residues 717–725 and K739; that span reads LGHGSHGTV. D832 acts as the Proton acceptor in catalysis. The interval 899-919 is disordered; the sequence is AIQGGESQHTESSEPAVVDPQ. A KEN domain is found at 1029 to 1163; that stretch reads PSDRLSFLCD…IDRFKRYFTP (135 aa).

Belongs to the protein kinase superfamily. Ser/Thr protein kinase family. Homodimer; in response to the accumulation of unfolded proteins. Mg(2+) is required as a cofactor. Autophosphorylated mainly on serine residues.

It localises to the membrane. The catalysed reaction is L-seryl-[protein] + ATP = O-phospho-L-seryl-[protein] + ADP + H(+). The enzyme catalyses L-threonyl-[protein] + ATP = O-phospho-L-threonyl-[protein] + ADP + H(+). With respect to regulation, 8-formyl-7-hydroxy-4-methylcoumarin inhibits the endonuclease activity and prebvent the splicing if the hacA mRNA. The kinase domain is activated by trans-autophosphorylation. Kinase activity is required for activation of the endoribonuclease domain. Its function is as follows. Senses unfolded proteins in the lumen of the endoplasmic reticulum (ER) via its N-terminal domain which leads to enzyme auto-activation. The active endoribonuclease domain responds by cleaving an intron from the downstream cytoplasmic mRNA hacA, allowing for the translation of a transcription factor that coordinates a series of adaptive responses that are collectively known as the unfolded protein response (UPR). In the absence of ER stress, ireA controls dual signaling circuits that are both hacA-dependent and hacA-independent and which contribute to the expression of traits that are essential for virulence. The polypeptide is Serine/threonine-protein kinase/endoribonuclease ireA (Aspergillus fumigatus (strain ATCC MYA-4609 / CBS 101355 / FGSC A1100 / Af293) (Neosartorya fumigata)).